Consider the following 368-residue polypeptide: UDP-galactose/UDP-N-acetylglucosamine transporter srf-3 (368 aa).

8 helical membrane-spanning segments follow: residues 72–92, 118–138, 145–165, 174–194, 203–223, 235–254, 273–293, and 317–337; these read FVSTVAVWLTEVIKCFICLFL, LKVCIPAMIYIVQNNLFYVAA, TFMITSQLKIFTAAIFTVIIL, WFALAVLFVGVSLVQLQGTKA, FVGFVAVVVACCLSGFAGIYF, LWMRNVQMAVFSIPASFSAI, SIVWLTVLWYGVGGLSVAVCI, and IFLFDFIPSFTFLLGASLVIF.

The protein belongs to the nucleotide-sugar transporter family. SLC35A subfamily. In terms of tissue distribution, expressed exclusively in pharyngeal cells g1 and g2, lateral seam cells, spermatheca and vas deferens.

It is found in the golgi apparatus membrane. In terms of biological role, acts as a transporter of both UDP-galactose and UDP-N-acetylglucosamine into the Golgi lumen. Apparently transports UDP-galactose and UDP-N-acetylglucosamine simultaneously, and independently, by an unknown mechanism. Functions redundantly with nucleotide sugar transporter nstp-4. May be involved in gonadal development. This is UDP-galactose/UDP-N-acetylglucosamine transporter srf-3 (srf-3) from Caenorhabditis elegans.